The sequence spans 316 residues: Beta-agarase (316 aa).

The first 18 residues, 1 to 18, serve as a signal peptide directing secretion; sequence MKRKLFTICLASLQFACA. The GH16 domain maps to 27-315; sequence YEWDIYPVPA…WIRVYTLVPE (289 aa). Substrate-binding positions include tryptophan 78, 87–97, and 101–103; these read QRDHVSVSDGF and RAS. Catalysis depends on glutamate 167, which acts as the Nucleophile. Residue glutamate 172 is the Proton donor of the active site. Substrate is bound at residue arginine 197.

Belongs to the glycosyl hydrolase 16 family.

It carries out the reaction Hydrolysis of (1-&gt;4)-beta-D-galactosidic linkages in agarose, giving the tetramer as the predominant product.. Its function is as follows. Cleaves the beta-1,4-linkages between beta-D-galactose and alpha-L-3,6-anhydro-galactose residues in agarose. Cleaves agarose in a random manner with retention of the anomeric-bond configuration, producing beta-anomers that give rise progressively to alpha-anomers when mutarotation takes place. The protein is Beta-agarase of Phocaeicola plebeius (strain DSM 17135 / JCM 12973 / CCUG 54634 / M2) (Bacteroides plebeius).